A 378-amino-acid polypeptide reads, in one-letter code: Mannitol-1-phosphate 5-dehydrogenase (378 aa).

4–15 (SVHFGAGNIGRG) contributes to the NAD(+) binding site.

This sequence belongs to the mannitol dehydrogenase family.

It carries out the reaction D-mannitol 1-phosphate + NAD(+) = beta-D-fructose 6-phosphate + NADH + H(+). The sequence is that of Mannitol-1-phosphate 5-dehydrogenase from Streptococcus pneumoniae (strain ATCC 700669 / Spain 23F-1).